The primary structure comprises 236 residues: SPbeta prophage-derived uncharacterized protein YomV (236 aa).

The chain is SPbeta prophage-derived uncharacterized protein YomV (yomV) from Bacillus subtilis (strain 168).